Consider the following 75-residue polypeptide: Small ribosomal subunit protein bS18 (75 aa).

The protein belongs to the bacterial ribosomal protein bS18 family. Part of the 30S ribosomal subunit. Forms a tight heterodimer with protein bS6.

In terms of biological role, binds as a heterodimer with protein bS6 to the central domain of the 16S rRNA, where it helps stabilize the platform of the 30S subunit. The protein is Small ribosomal subunit protein bS18 of Dinoroseobacter shibae (strain DSM 16493 / NCIMB 14021 / DFL 12).